Consider the following 490-residue polypeptide: Cytochrome P450 monooxygenase aclL (490 aa).

Residues 1 to 21 form a helical membrane-spanning segment; it reads MLFSLGPLTIVYGLVIFVVAK. An N-linked (GlcNAc...) asparagine glycan is attached at Asn-176. Position 434 (Cys-434) interacts with heme.

Belongs to the cytochrome P450 family. Heme serves as cofactor.

The protein resides in the membrane. It participates in mycotoxin biosynthesis. In terms of biological role, cytochrome P450 monooxygenase; part of the gene cluster that mediates the biosynthesis of aspirochlorine (or antibiotic A30641), an unusual halogenated spiro compound with distinctive antifungal properties due to selective inhibition of protein biosynthesis, and which is also active against bacteria, viruses, and murine tumor cells. The non-ribosomal peptide synthetase (NRPS) aclP is responsible the formation of the diketopiperazine (DKP) core from the condensation of 2 phenylalanine residues. One Phe residue is tailored into chlorotyrosine by hydroxylation and chlorination, whereas the second Phe undergoes an unprecedented C-C bond cleavage to be converted into glycine. After formation of the DKP, sulfur is incorporated into the DKP by conjugation with glutathione by aclG, followed by its stepwise degradation to the thiol by aclI, aclJ and aclK, and the dithiol oxidation by aclT. In addition, oxygenases (aclB, aclC, aclL and aclO) and O-methyltransferases (aclM and aclU) act as tailoring enzymes to produce the intermediate dechloroaspirochlorine. Ultimately, chlorination of dechloroaspirochlorine by the halogenase aclH is the last step in the aspirochlorine pathway. The chain is Cytochrome P450 monooxygenase aclL from Aspergillus oryzae (strain ATCC 42149 / RIB 40) (Yellow koji mold).